The chain runs to 137 residues: Fluoride-specific ion channel FluC 1 (137 aa).

Transmembrane regions (helical) follow at residues 4–24 (LIYI…YYLG), 37–57 (LATL…TTYI), 62–82 (ILPA…FTTF), and 100–120 (IAFL…GLGY). Na(+) is bound by residues Gly77 and Thr80.

The protein belongs to the fluoride channel Fluc/FEX (TC 1.A.43) family.

It localises to the cell membrane. The enzyme catalyses fluoride(in) = fluoride(out). Na(+) is not transported, but it plays an essential structural role and its presence is essential for fluoride channel function. Its function is as follows. Fluoride-specific ion channel. Important for reducing fluoride concentration in the cell, thus reducing its toxicity. This Bacillus cereus (strain ATCC 10987 / NRS 248) protein is Fluoride-specific ion channel FluC 1.